Here is a 558-residue protein sequence, read N- to C-terminus: Arginine--tRNA ligase (558 aa).

The short motif at alanine 129–histidine 139 is the 'HIGH' region element.

This sequence belongs to the class-I aminoacyl-tRNA synthetase family. Monomer.

Its subcellular location is the cytoplasm. It carries out the reaction tRNA(Arg) + L-arginine + ATP = L-arginyl-tRNA(Arg) + AMP + diphosphate. The protein is Arginine--tRNA ligase of Polaromonas naphthalenivorans (strain CJ2).